The sequence spans 257 residues: PHD finger protein Alfin1 (257 aa).

Residues serine 145–glycine 200 are disordered. Positions asparagine 153–serine 166 are enriched in low complexity. Acidic residues predominate over residues aspartate 187–glutamine 199. The segment at glycine 200 to lysine 252 adopts a PHD-type zinc-finger fold.

This sequence belongs to the Alfin family. As to quaternary structure, interacts with H3K4me3 and to a lesser extent with H3K4me2. Predominantly expressed in the roots.

The protein resides in the nucleus. Functionally, histone-binding component that specifically recognizes H3 tails trimethylated on 'Lys-4' (H3K4me3), which mark transcription start sites of virtually all active genes. Transcriptional regulator that binds specifically to DNA sequences 5'-GNGGTG-3' or 5'-GTGGNG-3', including promoter elements of the salt-inducible PRP2 gene. Plays a role in salinity tolerance. The chain is PHD finger protein Alfin1 (ALFIN-1) from Medicago sativa (Alfalfa).